The chain runs to 181 residues: Protein GrpE (181 aa).

Over residues 1-24 (MSEENIGENEVETPETEPSAEAEV) the composition is skewed to acidic residues. The interval 1–26 (MSEENIGENEVETPETEPSAEAEVES) is disordered.

This sequence belongs to the GrpE family. In terms of assembly, homodimer.

The protein localises to the cytoplasm. Functionally, participates actively in the response to hyperosmotic and heat shock by preventing the aggregation of stress-denatured proteins, in association with DnaK and GrpE. It is the nucleotide exchange factor for DnaK and may function as a thermosensor. Unfolded proteins bind initially to DnaJ; upon interaction with the DnaJ-bound protein, DnaK hydrolyzes its bound ATP, resulting in the formation of a stable complex. GrpE releases ADP from DnaK; ATP binding to DnaK triggers the release of the substrate protein, thus completing the reaction cycle. Several rounds of ATP-dependent interactions between DnaJ, DnaK and GrpE are required for fully efficient folding. This is Protein GrpE from Rhizorhabdus wittichii (strain DSM 6014 / CCUG 31198 / JCM 15750 / NBRC 105917 / EY 4224 / RW1) (Sphingomonas wittichii).